The sequence spans 158 residues: Phosphopantetheine adenylyltransferase (158 aa).

Thr-10 serves as a coordination point for substrate. ATP contacts are provided by residues 10 to 11 (TF) and His-18. Substrate contacts are provided by Lys-42, Leu-74, and Arg-88. ATP is bound by residues 89–91 (GIR), Glu-99, and 124–130 (WRYLSST).

Belongs to the bacterial CoaD family. Homohexamer. Mg(2+) is required as a cofactor.

The protein localises to the cytoplasm. The enzyme catalyses (R)-4'-phosphopantetheine + ATP + H(+) = 3'-dephospho-CoA + diphosphate. It participates in cofactor biosynthesis; coenzyme A biosynthesis; CoA from (R)-pantothenate: step 4/5. Functionally, reversibly transfers an adenylyl group from ATP to 4'-phosphopantetheine, yielding dephospho-CoA (dPCoA) and pyrophosphate. The sequence is that of Phosphopantetheine adenylyltransferase from Actinobacillus pleuropneumoniae serotype 7 (strain AP76).